Consider the following 358-residue polypeptide: Peptide chain release factor 1 (358 aa).

Residue Q233 is modified to N5-methylglutamine.

The protein belongs to the prokaryotic/mitochondrial release factor family. In terms of processing, methylated by PrmC. Methylation increases the termination efficiency of RF1.

The protein localises to the cytoplasm. Its function is as follows. Peptide chain release factor 1 directs the termination of translation in response to the peptide chain termination codons UAG and UAA. This chain is Peptide chain release factor 1, found in Clostridium botulinum (strain 657 / Type Ba4).